Here is a 248-residue protein sequence, read N- to C-terminus: 4-hydroxy-tetrahydrodipicolinate reductase (248 aa).

Residues aspartate 32, 74 to 76 (GTT), and 99 to 102 (SANF) each bind NAD(+). Histidine 134 serves as the catalytic Proton donor/acceptor. Histidine 135 contacts (S)-2,3,4,5-tetrahydrodipicolinate. Lysine 138 (proton donor) is an active-site residue. 144–145 (GT) serves as a coordination point for (S)-2,3,4,5-tetrahydrodipicolinate.

The protein belongs to the DapB family.

The protein localises to the cytoplasm. The enzyme catalyses (S)-2,3,4,5-tetrahydrodipicolinate + NAD(+) + H2O = (2S,4S)-4-hydroxy-2,3,4,5-tetrahydrodipicolinate + NADH + H(+). The catalysed reaction is (S)-2,3,4,5-tetrahydrodipicolinate + NADP(+) + H2O = (2S,4S)-4-hydroxy-2,3,4,5-tetrahydrodipicolinate + NADPH + H(+). It functions in the pathway amino-acid biosynthesis; L-lysine biosynthesis via DAP pathway; (S)-tetrahydrodipicolinate from L-aspartate: step 4/4. Its function is as follows. Catalyzes the conversion of 4-hydroxy-tetrahydrodipicolinate (HTPA) to tetrahydrodipicolinate. The chain is 4-hydroxy-tetrahydrodipicolinate reductase from Pelodictyon phaeoclathratiforme (strain DSM 5477 / BU-1).